The chain runs to 345 residues: L-threonine 3-dehydrogenase (345 aa).

Cys39 provides a ligand contact to Zn(2+). Active-site charge relay system residues include Thr41 and His44. His64, Glu65, Cys94, Cys97, Cys100, and Cys108 together coordinate Zn(2+). NAD(+) contacts are provided by residues Ile176, Asp196, Arg201, 263–265, and 287–288; these read LGI and VY.

Belongs to the zinc-containing alcohol dehydrogenase family. In terms of assembly, homotetramer. Zn(2+) is required as a cofactor.

It localises to the cytoplasm. The catalysed reaction is L-threonine + NAD(+) = (2S)-2-amino-3-oxobutanoate + NADH + H(+). It functions in the pathway amino-acid degradation; L-threonine degradation via oxydo-reductase pathway; glycine from L-threonine: step 1/2. Catalyzes the NAD(+)-dependent oxidation of L-threonine to 2-amino-3-ketobutyrate. The chain is L-threonine 3-dehydrogenase from Anaeromyxobacter dehalogenans (strain 2CP-1 / ATCC BAA-258).